The following is a 1166-amino-acid chain: MKQRWLLVLILCFFTTSLVMGIHGKHLINDDFNETALLLAFKQNSVKSDPNNVLGNWKYESGRGSCSWRGVSCSDDGRIVGLDLRNSGLTGTLNLVNLTALPNLQNLYLQGNYFSSGGDSSGSDCYLQVLDLSSNSISDYSMVDYVFSKCSNLVSVNISNNKLVGKLGFAPSSLQSLTTVDLSYNILSDKIPESFISDFPASLKYLDLTHNNLSGDFSDLSFGICGNLTFFSLSQNNLSGDKFPITLPNCKFLETLNISRNNLAGKIPNGEYWGSFQNLKQLSLAHNRLSGEIPPELSLLCKTLVILDLSGNTFSGELPSQFTACVWLQNLNLGNNYLSGDFLNTVVSKITGITYLYVAYNNISGSVPISLTNCSNLRVLDLSSNGFTGNVPSGFCSLQSSPVLEKILIANNYLSGTVPMELGKCKSLKTIDLSFNELTGPIPKEIWMLPNLSDLVMWANNLTGTIPEGVCVKGGNLETLILNNNLLTGSIPESISRCTNMIWISLSSNRLTGKIPSGIGNLSKLAILQLGNNSLSGNVPRQLGNCKSLIWLDLNSNNLTGDLPGELASQAGLVMPGSVSGKQFAFVRNEGGTDCRGAGGLVEFEGIRAERLERLPMVHSCPATRIYSGMTMYTFSANGSMIYFDISYNAVSGFIPPGYGNMGYLQVLNLGHNRITGTIPDSFGGLKAIGVLDLSHNNLQGYLPGSLGSLSFLSDLDVSNNNLTGPIPFGGQLTTFPVSRYANNSGLCGVPLRPCGSAPRRPITSRIHAKKQTVATAVIAGIAFSFMCFVMLVMALYRVRKVQKKEQKREKYIESLPTSGSCSWKLSSVPEPLSINVATFEKPLRKLTFAHLLEATNGFSAETMVGSGGFGEVYKAQLRDGSVVAIKKLIRITGQGDREFMAEMETIGKIKHRNLVPLLGYCKVGEERLLVYEYMKWGSLETVLHEKSSKKGGIYLNWAARKKIAIGAARGLAFLHHSCIPHIIHRDMKSSNVLLDEDFEARVSDFGMARLVSALDTHLSVSTLAGTPGYVPPEYYQSFRCTAKGDVYSYGVILLELLSGKKPIDPGEFGEDNNLVGWAKQLYREKRGAEILDPELVTDKSGDVELFHYLKIASQCLDDRPFKRPTMIQLMAMFKEMKADTEEDESLDEFSLKETPLVEESRDKEP.

The signal sequence occupies residues 1–21 (MKQRWLLVLILCFFTTSLVMG). The Extracellular segment spans residues 22-776 (IHGKHLINDD…IHAKKQTVAT (755 aa)). A glycan (N-linked (GlcNAc...) asparagine) is linked at N33. The Cys pair 1 motif lies at 66–73 (CSWRGVSC). LRR repeat units follow at residues 78–99 (RIVG…VNLT), 103–124 (NLQN…SGSD), 126–147 (YLQV…DYVF), 152–173 (NLVS…APSS), 176–197 (SLTT…SFIS), 202–224 (SLKY…SFGI), 227–248 (NLTF…ITLP), 252–274 (FLET…EYWG), 278–300 (NLKQ…LSLL), 303–325 (TLVI…FTAC), 327–349 (WLQN…VVSK), 352–375 (GITY…TNCS), 376–397 (NLRV…GFCS), 403–424 (VLEK…ELGK), 427–449 (SLKT…IWML), 451–473 (NLSD…VCVK), 476–498 (NLET…ISRC), 500–522 (NMIW…IGNL), 524–547 (KLAI…GNCK), and 548–570 (SLIW…LASQ). Residue N97 is glycosylated (N-linked (GlcNAc...) asparagine). N157 carries N-linked (GlcNAc...) asparagine glycosylation. N-linked (GlcNAc...) asparagine glycosylation is found at N212, N227, N237, and N257. 2 N-linked (GlcNAc...) asparagine glycosylation sites follow: N362 and N373. N-linked (GlcNAc...) asparagine glycans are attached at residues N451 and N461. N521, N532, N558, and N638 each carry an N-linked (GlcNAc...) asparagine glycan. LRR repeat units follow at residues 664–686 (YLQV…FGGL), 688–710 (AIGV…LGSL), and 712–734 (FLSD…GQLT). 2 N-linked (GlcNAc...) asparagine glycosylation sites follow: N722 and N743. The short motif at 748–755 (CGVPLRPC) is the Cys pair 2 element. A helical transmembrane segment spans residues 777–797 (AVIAGIAFSFMCFVMLVMALY). The Cytoplasmic portion of the chain corresponds to 798 to 1166 (RVRKVQKKEQ…LVEESRDKEP (369 aa)). Phosphothreonine is present on residues T848 and T856. The region spanning 859 to 1147 (FSAETMVGSG…KADTEEDESL (289 aa)) is the Protein kinase domain. Residues 865 to 873 (VGSGGFGEV) and K887 contribute to the ATP site. Y932 carries the post-translational modification Phosphotyrosine. Residue D987 is the Proton acceptor of the active site. Position 1022 is a phosphoserine (S1022). Residue Y1030 is modified to Phosphotyrosine. Phosphothreonine is present on T1141. The tract at residues 1142–1166 (EEDESLDEFSLKETPLVEESRDKEP) is disordered.

This sequence belongs to the protein kinase superfamily. Ser/Thr protein kinase family. Predominantly expressed in vascular tissues. From 7 day old seedlings, it is expressed in the columella cells of the root tip, in the vascular initials in the meristematic region of the root and in vascular tissues. After germination, it is expressed in the stele cell and in the early differentiation zone of the root, where the expression continues from the root to the hypocotyls and cotyledons following the midvein. In mature plants, it is expressed in the vasculature of the leaf, predominantly in the midvein, and in the vascular bundles of inflorescence stems. Localizes to procambial cells of the vascular bundles located between the differentiating xylem and the phloem.

It is found in the cell membrane. It catalyses the reaction L-seryl-[protein] + ATP = O-phospho-L-seryl-[protein] + ADP + H(+). The enzyme catalyses L-threonyl-[protein] + ATP = O-phospho-L-threonyl-[protein] + ADP + H(+). Functionally, receptor with a serine/threonine-protein kinase activity. Regulates, in response to brassinosteroid binding, a signaling cascade involved in plant development. Binds brassinolide. May be involved in cell growth and vascular differentiation. In Arabidopsis thaliana (Mouse-ear cress), this protein is Serine/threonine-protein kinase BRI1-like 1 (BRL1).